A 123-amino-acid polypeptide reads, in one-letter code: UPF0382 membrane protein YwdK (123 aa).

4 consecutive transmembrane segments (helical) span residues 3–23 (VFII…AFGA), 49–69 (ALGL…GSVT), 71–91 (AGWL…ILSV), and 96–116 (ILGA…IMIV).

It belongs to the UPF0382 family.

It localises to the cell membrane. In Bacillus subtilis (strain 168), this protein is UPF0382 membrane protein YwdK (ywdK).